We begin with the raw amino-acid sequence, 448 residues long: Ribosomal protein uS12 methylthiotransferase RimO (448 aa).

An MTTase N-terminal domain is found at 7–119; the sequence is QSLHLISLGC…IDSMIAQRRS (113 aa). [4Fe-4S] cluster contacts are provided by cysteine 16, cysteine 50, cysteine 82, cysteine 151, cysteine 155, and cysteine 158. The 230-residue stretch at 137 to 366 folds into the Radical SAM core domain; the sequence is IGSSFHAYIK…NKIIQSQYKA (230 aa).

The protein belongs to the methylthiotransferase family. RimO subfamily. The cofactor is [4Fe-4S] cluster.

Its subcellular location is the cytoplasm. It carries out the reaction L-aspartate(89)-[ribosomal protein uS12]-hydrogen + (sulfur carrier)-SH + AH2 + 2 S-adenosyl-L-methionine = 3-methylsulfanyl-L-aspartate(89)-[ribosomal protein uS12]-hydrogen + (sulfur carrier)-H + 5'-deoxyadenosine + L-methionine + A + S-adenosyl-L-homocysteine + 2 H(+). In terms of biological role, catalyzes the methylthiolation of an aspartic acid residue of ribosomal protein uS12. The sequence is that of Ribosomal protein uS12 methylthiotransferase RimO from Helicobacter hepaticus (strain ATCC 51449 / 3B1).